Reading from the N-terminus, the 171-residue chain is Envelope protein UL128 (171 aa).

Belongs to the HHV-5 UL128 protein family. Forms the envelope pentamer complex (PC) composed of gH, gL, UL128, UL130, and UL131A. The pentamer interacts with host NRP2.

The protein localises to the virion membrane. Its function is as follows. Plays a role in viral entry into host cells. Forms a pentameric complex at the surface of the viral envelope together with gH, gL, UL130 and UL131. This complex is required for entry in epithelial, endothelial and myeloid host cells. Mechanistically, engages host receptor(s) including neurophilin 2/NRP2 to mediate infection. Additionally, monomeric UL128 may interfere with certain inflammatory cytokines to increase infection and dissemination by blocking monocytes migration. In Human cytomegalovirus (strain Merlin) (HHV-5), this protein is Envelope protein UL128 (UL128).